A 425-amino-acid polypeptide reads, in one-letter code: UDP-N-acetylglucosamine 1-carboxyvinyltransferase (425 aa).

Phosphoenolpyruvate is bound at residue 23–24 (KN). Arg100 lines the UDP-N-acetyl-alpha-D-glucosamine pocket. Catalysis depends on Cys124, which acts as the Proton donor. 2-(S-cysteinyl)pyruvic acid O-phosphothioketal is present on Cys124. UDP-N-acetyl-alpha-D-glucosamine contacts are provided by residues 169–172 (KVSV), Asp313, and Val335.

Belongs to the EPSP synthase family. MurA subfamily.

It localises to the cytoplasm. It carries out the reaction phosphoenolpyruvate + UDP-N-acetyl-alpha-D-glucosamine = UDP-N-acetyl-3-O-(1-carboxyvinyl)-alpha-D-glucosamine + phosphate. Its pathway is cell wall biogenesis; peptidoglycan biosynthesis. Functionally, cell wall formation. Adds enolpyruvyl to UDP-N-acetylglucosamine. The sequence is that of UDP-N-acetylglucosamine 1-carboxyvinyltransferase from Wolbachia pipientis subsp. Culex pipiens (strain wPip).